Here is a 127-residue protein sequence, read N- to C-terminus: Protein KRTCAP2 homolog (127 aa).

The next 4 membrane-spanning stretches (helical) occupy residues 13–33 (LISL…SNFF), 41–61 (ILGG…IGAI), 65–85 (VKLL…SSVH), and 87–107 (VSGT…NHAS).

It belongs to the KRTCAP2 family. In terms of assembly, component of the oligosaccharyltransferase (OST) complex.

It is found in the membrane. Its function is as follows. Subunit of the oligosaccharyl transferase (OST) complex that catalyzes the initial transfer of a defined glycan (Glc(3)Man(9)GlcNAc(2) in eukaryotes) from the lipid carrier dolichol-pyrophosphate to an asparagine residue within an Asn-X-Ser/Thr consensus motif in nascent polypeptide chains, the first step in protein N-glycosylation. N-glycosylation occurs cotranslationally and the complex associates with the Sec61 complex at the channel-forming translocon complex that mediates protein translocation across the endoplasmic reticulum (ER). All subunits are required for a maximal enzyme activity. This Dictyostelium discoideum (Social amoeba) protein is Protein KRTCAP2 homolog.